Here is a 419-residue protein sequence, read N- to C-terminus: NF-kappa-B essential modulator (419 aa).

Residues 1–48 (MSRPPWKSPLCEMVQPSGSPAGDQDMLGEESSLGKPAMLHVPSEQGTP) are disordered. Positions 1–197 (MSRPPWKSPL…REALEQRHSV (197 aa)) are required for interaction with and ubiquitination by MARCHF2. Phosphoserine; by IKKB is present on residues serine 31 and serine 43. The tract at residues 44 to 111 (EQGTPETFQR…DLVVRLSLEK (68 aa)) is interaction with CHUK/IKBKB. The stretch at 49-353 (ETFQRCLEEN…KTSCQESARI (305 aa)) forms a coiled coil. Serine 68 is modified (phosphoserine). Residues lysine 111, lysine 139, lysine 143, lysine 226, lysine 246, and lysine 264 each participate in a glycyl lysine isopeptide (Lys-Gly) (interchain with G-Cter in ubiquitin) cross-link. The interval 150 to 257 (LGELQESQSR…SMVSSERNRG (108 aa)) is interaction with TANK. Positions 242-350 (DNHMKSSMVS…SRLKTSCQES (109 aa)) are ubiquitin-binding (UBAN). A self-association region spans residues 246 to 365 (KSSMVSSERN…MRKRHVEVSQ (120 aa)). The tract at residues 251 to 419 (SSERNRGLQL…LQIHVMECIE (169 aa)) is required for interaction with TNFAIP3. Lysine 277 participates in a covalent cross-link: Glycyl lysine isopeptide (Lys-Gly) (interchain with G-Cter in SUMO); alternate. Residue lysine 277 forms a Glycyl lysine isopeptide (Lys-Gly) (interchain with G-Cter in ubiquitin); alternate linkage. Residues lysine 283, lysine 285, lysine 292, and lysine 302 each participate in a glycyl lysine isopeptide (Lys-Gly) (interchain with G-Cter in ubiquitin) cross-link. Lysine 309 participates in a covalent cross-link: Glycyl lysine isopeptide (Lys-Gly) (interchain with G-Cter in SUMO); alternate. A Glycyl lysine isopeptide (Lys-Gly) (interchain with G-Cter in ubiquitin); alternate cross-link involves residue lysine 309. Glycyl lysine isopeptide (Lys-Gly) (interchain with G-Cter in ubiquitin) cross-links involve residues lysine 321, lysine 325, and lysine 326. Residues 322–343 (LAEKKEFLQEQLEQLQREYSRL) are leucine-zipper. A disordered region spans residues 356–394 (MRKRHVEVSQPPLAPGPAHHSFHLNPSSQRRSPPDEPPK). Phosphoserine; by IKKB is present on serine 376. Residues 382 to 419 (SSQRRSPPDEPPKFCCPKCQYQAPDIDTLQIHVMECIE) are interaction with CYLD. Serine 387 carries the phosphoserine modification. The segment at 389 to 419 (PDEPPKFCCPKCQYQAPDIDTLQIHVMECIE) adopts a CCHC NOA-type zinc-finger fold. Zn(2+) is bound at residue cysteine 397. A Glycyl lysine isopeptide (Lys-Gly) (interchain with G-Cter in ubiquitin) cross-link involves residue lysine 399. Residues cysteine 400, histidine 413, and cysteine 417 each contribute to the Zn(2+) site.

Homodimer; disulfide-linked. Component of the I-kappa-B-kinase (IKK) core complex consisting of CHUK, IKBKB and IKBKG; probably four alpha/CHUK-beta/IKBKB dimers are associated with four gamma/IKBKG subunits. The IKK core complex seems to associate with regulatory or adapter proteins to form a IKK-signalosome holo-complex. The IKK complex associates with TERF2IP/RAP1, leading to promote IKK-mediated phosphorylation of RELA/p65. Part of a complex composed of NCOA2, NCOA3, CHUK/IKKA, IKBKB, IKBKG and CREBBP. Interacts with COPS3, CYLD, NALP2, TRPC4AP and PIDD1. Interacts with ATM; the complex is exported from the nucleus. Interacts with TRAF6. Interacts with IKBKE. Interacts with TANK; the interaction is enhanced by IKBKE and TBK1. Part of a ternary complex consisting of TANK, IKBKB and IKBKG. Interacts with ZFAND5. Interacts with RIPK2. Interacts with TNIP1 and TNFAIP3; TNIP1 facilitates the TNFAIP3-mediated de-ubiquitination of IKBKG. Interacts with TNFAIP3; the interaction is induced by TNF stimulation and by polyubiquitin. Binds (via UBAN region) polyubiquitin; binds both 'Lys-63'-linked and linear polyubiquitin, with higher affinity for linear ubiquitin. Interacts with NLRP10. Interacts with TANK; this interaction increases in response to DNA damage. Interacts with USP10; this interaction increases in response to DNA damage. Interacts with ZC3H12A; this interaction increases in response to DNA damage. Interacts with IFIT5; the interaction synergizes the recruitment of IKK to MAP3K7 and enhances IKK phosphorylation. Interacts with TRIM29; this interaction induces IKBKG/NEMO ubiquitination and proteolytic degradation. Interacts with TRIM13; this interaction leads to IKBKG/NEMO ubiquitination. Interacts with ARFIP2. Interacts with RIPK1. Interacts with (ubiquitinated) BCL10; interaction with polyubiquitinated BCL10 via both 'Lys-63'-linked and linear ubiquitin is required for TCR-induced NF-kappa-B activation. Interacts with MARCHF2; during the late stages of macrophage viral and bacterial infection; the interaction leads to ubiquitination and degradation of IKBKG/NEMO. Post-translationally, phosphorylation at Ser-68 attenuates aminoterminal homodimerization. In terms of processing, polyubiquitinated on Lys-285 through 'Lys-63'; the ubiquitination is mediated downstream of NOD2 and RIPK2 and probably plays a role in signaling by facilitating interactions with ubiquitin domain-containing proteins and activates the NF-kappa-B pathway. Polyubiquitinated on Lys-399 through 'Lys-63'; the ubiquitination is mediated by BCL10, MALT1 and TRAF6 and probably plays a role in signaling by facilitating interactions with ubiquitin domain-containing proteins and activates the NF-kappa-B pathway. Monoubiquitinated on Lys-277 and Lys-309; promotes nuclear export. Polyubiquitinated through 'Lys-27' by TRIM23; involved in antiviral innate and inflammatory responses. Linear polyubiquitinated on Lys-111, Lys-143, Lys-226, Lys-246, Lys-264, Lys-277, Lys-285, Lys-292, Lys-302, Lys-309 and Lys-326; the head-to-tail polyubiquitination is mediated by the LUBAC complex and plays a key role in NF-kappa-B activation. Deubiquitinated by USP10 in a TANK-dependent and -independent manner, leading to the negative regulation of NF-kappa-B signaling upon DNA damage. Ubiquitinated at Lys-326 by MARCHF2 following bacterial and viral infection which leads to its degradation. Polyubiquitinated via 'Lys-29'-linked ubiquitin; leading to lysosomal degradation. Sumoylated on Lys-277 and Lys-309 with SUMO1. Post-translationally, neddylated by TRIM40, resulting in stabilization of NFKBIA and down-regulation of NF-kappa-B activity.

The protein resides in the cytoplasm. It localises to the nucleus. In terms of biological role, regulatory subunit of the IKK core complex which phosphorylates inhibitors of NF-kappa-B thus leading to the dissociation of the inhibitor/NF-kappa-B complex and ultimately the degradation of the inhibitor. Its binding to scaffolding polyubiquitin plays a key role in IKK activation by multiple signaling receptor pathways. Can recognize and bind both 'Lys-63'-linked and linear polyubiquitin upon cell stimulation, with a much highr affinity for linear polyubiquitin. Could be implicated in NF-kappa-B-mediated protection from cytokine toxicity. Essential for viral activation of IRF3. Involved in TLR3- and IFIH1-mediated antiviral innate response; this function requires 'Lys-27'-linked polyubiquitination. The sequence is that of NF-kappa-B essential modulator (IKBKG) from Bos taurus (Bovine).